A 276-amino-acid polypeptide reads, in one-letter code: Undecaprenyl-diphosphatase (276 aa).

8 helical membrane-spanning segments follow: residues 1 to 21 (MELY…FLPV), 40 to 60 (ALSF…LVFF), 93 to 113 (VRLA…GLIL), 120 to 140 (LFSS…FLWL), 154 to 174 (IGFG…IPGI), 199 to 219 (FLLS…ESFA), 227 to 247 (VTLL…VALL), and 255 to 275 (FYLF…AGFV).

This sequence belongs to the UppP family.

The protein resides in the cell inner membrane. It carries out the reaction di-trans,octa-cis-undecaprenyl diphosphate + H2O = di-trans,octa-cis-undecaprenyl phosphate + phosphate + H(+). Catalyzes the dephosphorylation of undecaprenyl diphosphate (UPP). Confers resistance to bacitracin. The sequence is that of Undecaprenyl-diphosphatase from Desulforapulum autotrophicum (strain ATCC 43914 / DSM 3382 / VKM B-1955 / HRM2) (Desulfobacterium autotrophicum).